Consider the following 491-residue polypeptide: Protein DETOXIFICATION 28 (491 aa).

A run of 12 helical transmembrane segments spans residues 47-67 (IVGPAIFTRVTTNLIFVITQA), 77-97 (LAAISIVNNVIIGFNYSLFIG), 127-147 (IVLFLFSILLLPMYIFATPIL), 160-180 (SGIISVWAIPTHFSFAFFFPI), 192-212 (VIAISSGVSLVVHIFVCWLFV), 228-248 (VSWWLNVFILFTYTTCGGCPL), 272-292 (GIMVCLENWYYRMLIVMTGNL), 302-322 (MSICMSINGLEMMVPLAFFAG), 352-372 (IIGIIISVLIYFLLDQIGWMF), 387-407 (ILLSFAILLNSVQPVLSGVAV), 414-434 (LVAFINLGCYYFIGLPLGIVM), and 444-464 (GIWAGMIFGGTMVQTLILIFI).

Belongs to the multi antimicrobial extrusion (MATE) (TC 2.A.66.1) family.

It is found in the membrane. The chain is Protein DETOXIFICATION 28 from Arabidopsis thaliana (Mouse-ear cress).